The primary structure comprises 117 residues: DNA-binding protein MK1619 (117 aa).

This sequence belongs to the PDCD5 family.

This is DNA-binding protein MK1619 from Methanopyrus kandleri (strain AV19 / DSM 6324 / JCM 9639 / NBRC 100938).